The sequence spans 144 residues: Transcriptional regulator SlyA (144 aa).

Residues 2–135 (ESPLGSDLAR…LNKIISKLEK (134 aa)) enclose the HTH marR-type domain. Positions 49–72 (QIQLAKAIGIEQPSLVRTLDQLEE) form a DNA-binding region, H-T-H motif.

It belongs to the SlyA family. In terms of assembly, homodimer.

Transcription regulator that can specifically activate or repress expression of target genes. This Blochmanniella pennsylvanica (strain BPEN) protein is Transcriptional regulator SlyA.